The following is a 253-amino-acid chain: Imidazole glycerol phosphate synthase subunit HisF (253 aa).

Catalysis depends on residues Asp-11 and Asp-130.

The protein belongs to the HisA/HisF family. Heterodimer of HisH and HisF.

It is found in the cytoplasm. It carries out the reaction 5-[(5-phospho-1-deoxy-D-ribulos-1-ylimino)methylamino]-1-(5-phospho-beta-D-ribosyl)imidazole-4-carboxamide + L-glutamine = D-erythro-1-(imidazol-4-yl)glycerol 3-phosphate + 5-amino-1-(5-phospho-beta-D-ribosyl)imidazole-4-carboxamide + L-glutamate + H(+). It functions in the pathway amino-acid biosynthesis; L-histidine biosynthesis; L-histidine from 5-phospho-alpha-D-ribose 1-diphosphate: step 5/9. IGPS catalyzes the conversion of PRFAR and glutamine to IGP, AICAR and glutamate. The HisF subunit catalyzes the cyclization activity that produces IGP and AICAR from PRFAR using the ammonia provided by the HisH subunit. This chain is Imidazole glycerol phosphate synthase subunit HisF, found in Ruminiclostridium cellulolyticum (strain ATCC 35319 / DSM 5812 / JCM 6584 / H10) (Clostridium cellulolyticum).